The following is a 101-amino-acid chain: Small ribosomal subunit protein uS14 (101 aa).

Belongs to the universal ribosomal protein uS14 family. As to quaternary structure, part of the 30S ribosomal subunit. Contacts proteins S3 and S10.

Functionally, binds 16S rRNA, required for the assembly of 30S particles and may also be responsible for determining the conformation of the 16S rRNA at the A site. The polypeptide is Small ribosomal subunit protein uS14 (Tropheryma whipplei (strain TW08/27) (Whipple's bacillus)).